Reading from the N-terminus, the 88-residue chain is MANTKSAKKFIIKSKKNRNRNLSNRSMLKTFIKKVNIAINKRNISEALFAFKNMQKCIDRQSIKGLIHKNKAARCKSKIFRRISLLIN.

It belongs to the bacterial ribosomal protein bS20 family.

Binds directly to 16S ribosomal RNA. The protein is Small ribosomal subunit protein bS20 of Blochmanniella floridana.